Here is a 362-residue protein sequence, read N- to C-terminus: Severin (362 aa).

The Gelsolin-like 1 repeat unit spans residues 53-102 (FKVVPVPESSYGKFYDGDSYIILHTFKEGNSLKHDIHFFLGTFTTQDEAG). Position 162 to 170 (162 to 170 (RLLHISGDK)) interacts with a 1,2-diacyl-sn-glycero-3-phospho-(1D-myo-inositol-4,5-bisphosphate). Gelsolin-like repeat units lie at residues 172–212 (AKVA…QEKN) and 280–323 (LKFS…NEKK).

It belongs to the villin/gelsolin family.

Functionally, severin blocks the ends of F-actin and causes the fragmentation and depolymerization of actin filaments in a Ca(2+) dependent manner. The chain is Severin (sevA) from Dictyostelium discoideum (Social amoeba).